Consider the following 482-residue polypeptide: Protein DETOXIFICATION 13 (482 aa).

Helical transmembrane passes span 39–59 (LICFAAPMAAVVIAQFMLQII), 77–97 (LASSFCNVTGFSFIVGLSCAL), 124–144 (LALVCLPLTLIWLNMETLLVF), 159–179 (AACLIPGLFAYAVLQPLTRYF), 188–208 (LLITSCFVFCLHVPLCWLLVY), 218–238 (ALALSFSNCLYTIILGSLMCF), 268–288 (AAMICLEWWSYELIILLSGLL), 297–317 (VLSVCLQTTATVYSIHLAIAA), 337–357 (IVVYAAMSLAVVEILILSTSL), 381–401 (MAPLVSISLILDGLQGVLSGI), 416–436 (LGAFYLWGIPIAASLAFWIHL), and 439–459 (VGLWIGIQAGAVLQTLLLTLV).

It belongs to the multi antimicrobial extrusion (MATE) (TC 2.A.66.1) family.

The protein resides in the membrane. The protein is Protein DETOXIFICATION 13 of Arabidopsis thaliana (Mouse-ear cress).